The chain runs to 372 residues: 4-hydroxy-3-methylbut-2-en-1-yl diphosphate synthase (flavodoxin) (372 aa).

Cysteine 270, cysteine 273, cysteine 305, and glutamate 312 together coordinate [4Fe-4S] cluster.

It belongs to the IspG family. [4Fe-4S] cluster serves as cofactor.

The enzyme catalyses (2E)-4-hydroxy-3-methylbut-2-enyl diphosphate + oxidized [flavodoxin] + H2O + 2 H(+) = 2-C-methyl-D-erythritol 2,4-cyclic diphosphate + reduced [flavodoxin]. The protein operates within isoprenoid biosynthesis; isopentenyl diphosphate biosynthesis via DXP pathway; isopentenyl diphosphate from 1-deoxy-D-xylulose 5-phosphate: step 5/6. Functionally, converts 2C-methyl-D-erythritol 2,4-cyclodiphosphate (ME-2,4cPP) into 1-hydroxy-2-methyl-2-(E)-butenyl 4-diphosphate. This Marinobacter nauticus (strain ATCC 700491 / DSM 11845 / VT8) (Marinobacter aquaeolei) protein is 4-hydroxy-3-methylbut-2-en-1-yl diphosphate synthase (flavodoxin).